A 575-amino-acid polypeptide reads, in one-letter code: MEHKNIGAEVLQDTYDDQQKWVLDSSLDSRGRVPLRARTGAWRAALFIIAIEFSERLSYFGLATNLVVYLTTILNQDLKMAIRNVNYWSGVTTLMPLLGGFIADAYLGRYATVLVATTIYLMGLVLLTMSWFIPGLKPCHQEVCVEPRKAHEVAFFIAIYLISIGTGGHKPSLESFGADQFDDDHVEERKMKMSFFNWWNVSLCAGILTAVTAVAYIEDRVGWGVAGIILTVVMAISLIIFFIGKPFYRYRTPSGSPLTPILQVFVAAIAKRNLPYPSDPSLLHEVSKTEFTSGRLLCHTEHLKFLDKAAIIEDKNPLALEKQSPWRLLTLTKVEETKLIINVIPIWFSTLAFGICATQASTFFIKQAITMDRHIGGFTVPPASMFTLTALTLIISLTVYEKLLVPLLRSITRNQRGINILQRIGTGMIFSLITMIIAALVEKQRLDRTNNNKPMSVIWLAPQFMVIGFADAFTLVGLQEYFYHQVPDSMRSLGIAFYLSVIGAASFLNNLLITAVDTLAENFSGKSWFGKDLNSSRLDRFYWFLAGVIAANICVFVIVAKRCPYKSVQPSQGLS.

The next 2 helical transmembrane spans lie at 44–64 (AALFIIAIEFSERLSYFGLAT) and 88–108 (WSGVTTLMPLLGGFIADAYLG). Thr112 bears the Phosphothreonine mark. The next 10 helical transmembrane spans lie at 113–133 (VLVATTIYLMGLVLLTMSWFI), 153–173 (VAFFIAIYLISIGTGGHKPSL), 195–215 (FFNWWNVSLCAGILTAVTAVA), 223–243 (WGVAGIILTVVMAISLIIFFI), 339–359 (LIINVIPIWFSTLAFGICATQ), 375–395 (IGGFTVPPASMFTLTALTLII), 420–440 (ILQRIGTGMIFSLITMIIAAL), 457–477 (VIWLAPQFMVIGFADAFTLVG), 493–513 (LGIAFYLSVIGAASFLNNLLI), and 541–561 (FYWFLAGVIAANICVFVIVAK).

The protein belongs to the major facilitator superfamily. Proton-dependent oligopeptide transporter (POT/PTR) (TC 2.A.17) family. Expressed in stems, shoots, leaves, flowers and siliques.

The protein resides in the membrane. The chain is Protein NRT1/ PTR FAMILY 5.6 (NPF5.6) from Arabidopsis thaliana (Mouse-ear cress).